The chain runs to 74 residues: MATKISHLVSLLLSLLLLLLFISSQVGFTEAKRDERKKMSSPPIPSPLIPSPPIPPPPPRFYVPPSKSRRGKGP.

Residues 1–31 (MATKISHLVSLLLSLLLLLLFISSQVGFTEA) form the signal peptide. The tract at residues 29–74 (TEAKRDERKKMSSPPIPSPLIPSPPIPPPPPRFYVPPSKSRRGKGP) is disordered. Over residues 42–62 (PPIPSPLIPSPPIPPPPPRFY) the composition is skewed to pro residues. Positions 60–74 (RFYVPPSKSRRGKGP) match the SCOOP motif motif. The short motif at 66–68 (SKS) is the SxS motif essential for MIK2 binding element.

Belongs to the serine rich endogenous peptide (SCOOP) phytocytokine family. As to quaternary structure, interacts with MIK2 (via extracellular leucine-rich repeat domain); this interaction triggers the formation of complex between MIK2 and the BAK1/SERK3 and SERK4 coreceptors, and subsequent BAK1 activation by phosphorylation.

It localises to the cell membrane. Its subcellular location is the secreted. The protein localises to the extracellular space. The protein resides in the apoplast. Functionally, brassicaceae-specific phytocytokine (plant endogenous peptide released into the apoplast) perceived by MIK2 in a BAK1/SERK3 and SERK4 coreceptors-dependent manner, that modulates various physiological and antimicrobial processes including growth prevention and reactive oxygen species (ROS) response regulation. This chain is Serine rich endogenous peptide 16, found in Arabidopsis thaliana (Mouse-ear cress).